The sequence spans 494 residues: 4-trimethylaminobutyraldehyde dehydrogenase (494 aa).

Ser-2 is subject to N-acetylserine. Residue Lys-30 is modified to N6-acetyllysine; alternate. The residue at position 30 (Lys-30) is an N6-succinyllysine; alternate. Residue Lys-59 is modified to N6-succinyllysine. NAD(+)-binding positions include Lys-180 and 232-236; that span reads GSVPT. The active-site Proton acceptor is the Glu-254. Cys-288 (nucleophile) is an active-site residue. Residue Lys-298 is modified to N6-acetyllysine. The residue at position 303 (Lys-303) is an N6-acetyllysine; alternate. An N6-succinyllysine; alternate modification is found at Lys-303. Lys-344 carries the post-translational modification N6-acetyllysine. An NAD(+)-binding site is contributed by Glu-391.

It belongs to the aldehyde dehydrogenase family. Homotetramer.

It is found in the cytoplasm. The protein localises to the cytosol. It catalyses the reaction 4-(trimethylamino)butanal + NAD(+) + H2O = 4-(trimethylamino)butanoate + NADH + 2 H(+). It carries out the reaction an aldehyde + NAD(+) + H2O = a carboxylate + NADH + 2 H(+). The catalysed reaction is 4-aminobutanal + NAD(+) + H2O = 4-aminobutanoate + NADH + 2 H(+). The enzyme catalyses formaldehyde + NAD(+) + H2O = formate + NADH + 2 H(+). It catalyses the reaction acetaldehyde + NAD(+) + H2O = acetate + NADH + 2 H(+). It carries out the reaction imidazole-4-acetaldehyde + NAD(+) + H2O = imidazole-4-acetate + NADH + 2 H(+). The catalysed reaction is acrolein + NAD(+) + H2O = acrylate + NADH + 2 H(+). The enzyme catalyses (5-hydroxyindol-3-yl)acetaldehyde + NAD(+) + H2O = (5-hydroxyindol-3-yl)acetate + NADH + 2 H(+). It catalyses the reaction 3,4-dihydroxyphenylacetaldehyde + NAD(+) + H2O = 3,4-dihydroxyphenylacetate + NADH + 2 H(+). It carries out the reaction spermine monoaldehyde + NAD(+) + H2O = N-(2-carboxyethyl)spermidine + NADH + 2 H(+). The catalysed reaction is propanal + NAD(+) + H2O = propanoate + NADH + 2 H(+). The enzyme catalyses butanal + NAD(+) + H2O = butanoate + NADH + 2 H(+). It catalyses the reaction pentanal + NAD(+) + H2O = pentanoate + NADH + 2 H(+). It carries out the reaction hexanal + NAD(+) + H2O = hexanoate + NADH + 2 H(+). It functions in the pathway amine and polyamine biosynthesis; carnitine biosynthesis. Converts gamma-trimethylaminobutyraldehyde into gamma-butyrobetaine with high efficiency (in vitro). Can catalyze the irreversible oxidation of a broad range of aldehydes to the corresponding acids in an NAD-dependent reaction, but with low efficiency. Catalyzes the oxidation of aldehydes arising from biogenic amines and polyamines. The protein is 4-trimethylaminobutyraldehyde dehydrogenase (ALDH9A1) of Sus scrofa (Pig).